The sequence spans 491 residues: Sucrose transport protein SUC7 (491 aa).

A compositionally biased stretch (basic and acidic residues) spans 1-13 (MSDLQANKDETTV). The interval 1 to 25 (MSDLQANKDETTVDRQSSSSVDLDG) is disordered. The Cytoplasmic segment spans residues 1 to 32 (MSDLQANKDETTVDRQSSSSVDLDGPSPLRKM). At Ser-17 the chain carries Phosphoserine. The chain crosses the membrane as a helical span at residues 33-53 (ISVASIAAGIQFGWALQLSLL). Over 54–67 (TPYVQLLGVPHKWP) the chain is Extracellular. A helical membrane pass occupies residues 68-88 (SFIWLCGPVSGLLVQPSVGYF). Topologically, residues 89–100 (SDRCTSRFGRRR) are cytoplasmic. Residues 101-121 (PFIATGALLVAVSVVLIGYAA) traverse the membrane as a helical segment. Residues 122 to 138 (DFGHSMGDKIDKPVKMR) lie on the Extracellular side of the membrane. Residues 139–159 (AVVIFALGFWILDVANNTLQG) traverse the membrane as a helical segment. Residues 160-180 (PCRAFLGDLAAGDAQKTRTAN) are Cytoplasmic-facing. Residues 181–201 (AFFSFFMAVGNVLGYAAGSYT) form a helical membrane-spanning segment. Residues 202–223 (NLYKIFPFTMTKACDIYCANLK) lie on the Extracellular side of the membrane. Residues 224–244 (SCFFLSITLLLVVTIIALWYV) form a helical membrane-spanning segment. The Cytoplasmic segment spans residues 245-276 (EDKQWSPKADSDNEKTPFFGEIFGAFKVMKRP). A helical transmembrane segment spans residues 277–297 (MWMLLIVTALNWIAWFPFLLY). The Extracellular portion of the chain corresponds to 298–323 (DTDWMGREVYGGDSKGDDKMKKLYNQ). Residues 324-344 (GIHVGALGLMLNSIVLGVMSL) form a helical membrane-spanning segment. The Cytoplasmic segment spans residues 345–358 (GIEGISRKMGGAKR). The chain crosses the membrane as a helical span at residues 359 to 379 (LWGAVNIILAVCLAMTVLVTK). Residues 380 to 402 (KAEEHRRIAGPMALPTDGIRAGA) are Extracellular-facing. Residues 403–423 (LTLFALLGIPLAITFSIPFAL) traverse the membrane as a helical segment. The Cytoplasmic portion of the chain corresponds to 424–443 (ASIISSSSGAGQRLSLGVLN). The chain crosses the membrane as a helical span at residues 444 to 464 (MAIVIPQMIVSFGVGPIDALF). At 465-468 (GDGN) the chain is on the extracellular side. A helical transmembrane segment spans residues 469–489 (LPGFVVGAIAAAVSSIVAFTV). Over 490-491 (LP) the chain is Cytoplasmic.

Belongs to the glycoside-pentoside-hexuronide (GPH) cation symporter transporter (TC 2.A.2.4) family. As to expression, expressed in anthers.

Its subcellular location is the cell membrane. It functions in the pathway glycan biosynthesis; sucrose metabolism. Functionally, may be responsible for the transport of glucosides into the cell, with the concomitant uptake of protons (symport system). Does not seem to transport sucrose. This Arabidopsis thaliana (Mouse-ear cress) protein is Sucrose transport protein SUC7.